The following is a 133-amino-acid chain: Putative HTH-type transcriptional regulator YwnA (133 aa).

The region spanning 1-130 (MINSRLAVAI…ASKSLKDVMN (130 aa)) is the HTH rrf2-type domain. Positions 24–47 (SEIIADSVNTNPVVVRRMISLLKK) form a DNA-binding region, H-T-H motif.

The polypeptide is Putative HTH-type transcriptional regulator YwnA (ywnA) (Bacillus subtilis (strain 168)).